The following is a 1894-amino-acid chain: MSWHEQDYGFGTSSENSKINSDEFEDSMDVTEFNNPGEESTYPQANSWNDSNKTKDIAEYYDYSWSGQREANQQIPQPVPVQPRYPDEQNFSMNGETYPSEAYDYDYSGQEEAINAMNILQGNLERSNEYYSEGVPYSEEDLGAYAGGMTEDDQMYSNFNETGEFNLDIGSSKFSYLNAKNPYPAWIAENSIPITAENILEIFQELQAKFGFQYDSMLNMYDFFMVLLDSRSSRMDAENALKSLHADYIGGRNANYRKWYFSSSMDIDDSVGLQNCKFSSNGPKIKQAKKKQKRKSNKAETEGTNEPETSVQIDPLNVSMENWENEMKNLDCETQVRQLALYLLCWGEANNIRFCPECLCFIFKLANDFMQSEDYAKSEPIEDDCFYLDNVITPLYEFIRDQQFELLDGKLVRRERDHAQIIGYDDINQLFWYPEGIARIVTVDGTQLITLPKWERFHKLSEVDWKKAFYKTFYESRSWFHLVTNFNRIWVIHFTTYWYYTVFNSPTIIEKNFRQSVGPKPIPSCHWTSVSLGGAVATLLMLLATIFEWIHVPRKFPGSRPLLKRFLILILFFILNVAPTVFVFGFSTEEQQRTTGRLTVAIVHFIFSVFTFIYFSLVPLNNLFHRAYKSSSRTHLANRYFTADYARLQINDMCVSWGLWLLVFGAKFTESYFFLSLSFRDPILVLSTMKPYLCNITFLGSHLCIWQPKILLGIMYVTDLVLFFLDTYLWYILVNTVFSVARSFFLGISIWTPWRNIFARMPKRIYSKILCTPEVDSSYKPKVLVSQIWNSIIISLYREHLLAIEHVQRLIYHQVNSLDGDGSKTLKTPTFFVSQEDSSFNTEYFPAHSEAERRLSFFAQSLATPIPEPIPVDAMPTFTVLVPHYGEKILLSLKEIIREQDKLSRVTLLEYLKQLHANEWKCFVRDTKILAEEDALSNQDLNSQDESMKAEQLHKKFDDLPFYCIGFKNATPEYTLRTRIWASLRSQTLYRTVSGFMNYSRAIKLLYRVENPDVAQLFEGQMDVLEYELDRMASRKFKMCVSMQRYAKFTADEIENTEFILRAYPDLLIAYLDEDPPKEGETTPQLYAALIDGYSELDENKKRKPKYRIKLSGNPILGDGKSDNQNLSLPFYRGEYIQLIDANQDNYLEECLKIRSILAEFEAFDLKTNDPYAETNALYQNNPVAIMGAREYIFSENIGILGDVAAGKEQTFGTLFARTMAQIGGKLHYGHPDFLNAIYMTTRGGVSKAQKGLHVNEDIYAGMTALQRGGRIKHCEYYQCGKGRDLGFGSILNFTTKIGTGMGEQMVSREYYYLGTQLPFDRFLSFYYAHPGFHINNIFIMLSVQLFMVVLVNLGGMYHVVTVCDYDHDQKLTVPMRPEGCYQLNPVVNWLKRCIISIFIVFFISFVPLTVQELTERGAWRALTRLGKHFASFSPMFEVFACQTYAQSVIANLSFGGARYIGTGRGFATARLSFSLLFSRFAGPSIYLGSRTLLMLLFGTMTVWIPHLIYFWISTLAMCISPFIFNPHQFSWTDFFVDYREFIRWLSRGNSRSHINSWIGYCRLTRTRITGYKRRLLGVPVSKGVIDTSRAHFTNMFFTEIFIPLMLVPLTLVSYFFIDSQPGNPDPSKVTNPILRILILAFLPIIVAAVVSMTFAGMACMMGPLLDLCCKKFGAVLAALAHGITVFMFIIVFEVSWYLEAWCLAKTVLSMLCIIAIQRFFFKIIQVLFLTRELKHDGTNLAWWTGKWYSRGLGFHALSQPSRELICKMTELNFFAADFFLCHLLLFLMLPVLLIPFIDRWHSMMLFWLKPSKQIRPPIYSMRQNRLRKKIVQRYGTMFFLLLIAFLALIIIPLVVAKDLLANFEMDILRTYGLMQPRDTNWTENGTNWTTVNE.

Disordered regions lie at residues 1-53 (MSWH…DSNK) and 282-310 (GPKI…PETS). The span at 32 to 51 (EFNNPGEESTYPQANSWNDS) shows a compositional bias: polar residues. Residues 286–296 (KQAKKKQKRKS) are compositionally biased toward basic residues. A run of 16 helical transmembrane segments spans residues 530 to 550 (VSLG…FEWI), 566 to 586 (FLIL…VFGF), 600 to 620 (VAIV…LVPL), 655 to 675 (VSWG…YFFL), 710 to 730 (ILLG…TYLW), 731 to 751 (YILV…ISIW), 1338 to 1358 (IFIM…GGMY), 1394 to 1414 (CIIS…VQEL), 1476 to 1498 (LLFS…MLLF), 1503 to 1525 (VWIP…PFIF), 1598 to 1618 (FTEI…YFFI), 1637 to 1657 (ILIL…TFAG), 1673 to 1693 (FGAV…IIVF), 1697 to 1717 (WYLE…IIAI), 1778 to 1798 (DFFL…IPFI), and 1837 to 1857 (TMFF…LVVA).

It belongs to the glycosyltransferase 48 family. In terms of assembly, component of the 1,3-beta-glucan synthase (GS) complex, composed of at least the alternate catalytic subunits bgs1, bgs2, bgs3, and bgs4, and a regulatory subunit chr4.

The protein localises to the prospore membrane. It catalyses the reaction [(1-&gt;3)-beta-D-glucosyl](n) + UDP-alpha-D-glucose = [(1-&gt;3)-beta-D-glucosyl](n+1) + UDP + H(+). Functionally, alternate catalytic subunit of the 1,3-beta-glucan synthase (GS) complex. Synthesizes 1,3-beta-glucan, a major structural component of the yeast cell wall. Has a role in ascospore development where it is required for the assembly of a functional spore wall. The protein is 1,3-beta-glucan synthase component bgs2 of Schizosaccharomyces pombe (strain 972 / ATCC 24843) (Fission yeast).